The sequence spans 483 residues: Proline--tRNA ligase (483 aa).

It belongs to the class-II aminoacyl-tRNA synthetase family. ProS type 3 subfamily. In terms of assembly, homodimer.

It localises to the cytoplasm. The enzyme catalyses tRNA(Pro) + L-proline + ATP = L-prolyl-tRNA(Pro) + AMP + diphosphate. Catalyzes the attachment of proline to tRNA(Pro) in a two-step reaction: proline is first activated by ATP to form Pro-AMP and then transferred to the acceptor end of tRNA(Pro). The protein is Proline--tRNA ligase of Mycoplasma genitalium (strain ATCC 33530 / DSM 19775 / NCTC 10195 / G37) (Mycoplasmoides genitalium).